A 259-amino-acid polypeptide reads, in one-letter code: 5'-nucleotidase SurE (259 aa).

Asp-15, Asp-16, Ser-46, and Asn-102 together coordinate a divalent metal cation.

Belongs to the SurE nucleotidase family. A divalent metal cation is required as a cofactor.

The protein localises to the cytoplasm. The enzyme catalyses a ribonucleoside 5'-phosphate + H2O = a ribonucleoside + phosphate. Its function is as follows. Nucleotidase that shows phosphatase activity on nucleoside 5'-monophosphates. This Chlorobium luteolum (strain DSM 273 / BCRC 81028 / 2530) (Pelodictyon luteolum) protein is 5'-nucleotidase SurE.